A 338-amino-acid chain; its full sequence is Protein FosB (338 aa).

Disordered regions lie at residues 1 to 54 (MFQA…PGSF), 79 to 191 (MAQS…DQLE), 222 to 276 (CKIP…PPNL), and 316 to 338 (GAQR…LLAL). 2 stretches are compositionally biased toward polar residues: residues 13 to 31 (SRCS…SVDS) and 79 to 88 (MAQSQGQPLA). S27 bears the Phosphoserine mark. Residues 113-124 (SSGGASGSGGPS) show a composition bias toward gly residues. Over residues 125–137 (TSGTTSGPGPARP) the composition is skewed to low complexity. One can recognise a bZIP domain in the interval 155–218 (EEKRRVRRER…ERLEFVLVAH (64 aa)). Residues 157-182 (KRRVRRERNKLAAAKCRNRRRELTDR) form a basic motif region. The segment at 183-211 (LQAETDQLEEEKAELESEIAELQKEKERL) is leucine-zipper. Over residues 256-265 (LPPPPPPPLP) the composition is skewed to pro residues. Composition is skewed to polar residues over residues 266-276 (FQTSQDAPPNL) and 318-338 (QRTS…LLAL).

It belongs to the bZIP family. Fos subfamily. In terms of assembly, heterodimer; binds to DNA as heterodimer. Component of an AP-1 transcription factor complex; composed of FOS-JUN heterodimers. As part of the AP-1 transcription factor complex, forms heterodimers with JUN, JUNB or JUND, thereby binding to the AP-1 consensus sequence and stimulating transcription. Interacts with the BAF multiprotein chromatin-remodeling complex subunits SMARCB1 and SMARCD1. Interacts with ARID1A and JUN. Homodimer under oxidizing conditions and monomer under reducing conditions (in vitro). Heterodimer; binds to DNA as heterodimer. Forms heterodimers with JUNB, JUN or JUND; thereby binding to the AP-1 consensus sequence but does not stimulate transcription. Forms heterodimers with JUND under oxidizing conditions. In terms of processing, phosphorylated. Post-translationally, phosphorylated at Ser-27 by CSNK2A1; phosphorylation increases protein stability and transactivation potential. As to expression, expressed in the nucleus accumbens of the striatum (at protein level).

The protein resides in the nucleus. Its function is as follows. Heterodimerizes with proteins of the JUN family to form an AP-1 transcription factor complex, thereby enhancing their DNA binding activity to gene promoters containing an AP-1 consensus sequence 5'-TGA[GC]TCA-3' and enhancing their transcriptional activity. As part of the AP-1 complex, facilitates enhancer selection together with cell-type-specific transcription factors by collaboratively binding to nucleosomal enhancers and recruiting the SWI/SNF (BAF) chromatin remodeling complex to establish accessible chromatin. Together with JUN, plays a role in activation-induced cell death of T cells by binding to the AP-1 promoter site of FASLG/CD95L, and inducing its transcription in response to activation of the TCR/CD3 signaling pathway. Exhibits transactivation activity in vitro. Involved in the display of nurturing behavior towards newborns. May play a role in neurogenesis in the hippocampus and in learning and memory-related tasks by regulating the expression of various genes involved in neurogenesis, depression and epilepsy. Implicated in behavioral responses related to morphine reward and spatial memory. In terms of biological role, exhibits lower transactivation activity than isoform 1 in vitro. The heterodimer with JUN does not display any transcriptional activity, and may thereby act as an transcriptional inhibitor. May be involved in the regulation of neurogenesis in the hippocampus. May play a role in synaptic modifications in nucleus accumbens medium spiny neurons and thereby play a role in adaptive and pathological reward-dependent learning, including maladaptive responses involved in drug addiction. Seems to be more stably expressed with a half-life of ~9.5 hours in cell culture as compared to 1.5 hours half-life of isoform 1. The protein is Protein FosB (FOSB) of Homo sapiens (Human).